Consider the following 446-residue polypeptide: Glucarate dehydratase (446 aa).

4 residues coordinate substrate: histidine 32, threonine 103, tyrosine 150, and lysine 205. Residue lysine 207 is the Proton acceptor of the active site. Mg(2+) is bound by residues aspartate 235, glutamate 266, and asparagine 289. 235 to 237 (DPN) contributes to the substrate binding site. Substrate-binding positions include asparagine 289, 339–341 (HSN), histidine 368, and arginine 422. Catalysis depends on histidine 339, which acts as the Proton acceptor.

It belongs to the mandelate racemase/muconate lactonizing enzyme family. GlucD subfamily. Homodimer. Mg(2+) is required as a cofactor.

It carries out the reaction D-glucarate = 5-dehydro-4-deoxy-D-glucarate + H2O. It participates in carbohydrate acid metabolism; D-glucarate degradation; 2,5-dioxopentanoate from D-glucarate: step 1/2. Its function is as follows. Catalyzes the dehydration of glucarate to 5-keto-4-deoxy-D-glucarate (5-kdGluc). Also acts on L-idarate. This is Glucarate dehydratase (gudD) from Escherichia coli O157:H7.